Here is a 232-residue protein sequence, read N- to C-terminus: Large ribosomal subunit protein uL1 (232 aa).

Belongs to the universal ribosomal protein uL1 family. Part of the 50S ribosomal subunit.

Functionally, binds directly to 23S rRNA. The L1 stalk is quite mobile in the ribosome, and is involved in E site tRNA release. Protein L1 is also a translational repressor protein, it controls the translation of the L11 operon by binding to its mRNA. This is Large ribosomal subunit protein uL1 from Bacillus pumilus (strain SAFR-032).